A 95-amino-acid chain; its full sequence is Integration host factor subunit beta (95 aa).

The tract at residues 59 to 95 (RVGRNPKTGQSVRLDGKFVPHFKPGKELRDRVNEDES) is disordered. Residues 72–95 (LDGKFVPHFKPGKELRDRVNEDES) are compositionally biased toward basic and acidic residues.

It belongs to the bacterial histone-like protein family. As to quaternary structure, heterodimer of an alpha and a beta chain.

This protein is one of the two subunits of integration host factor, a specific DNA-binding protein that functions in genetic recombination as well as in transcriptional and translational control. The protein is Integration host factor subunit beta of Ectopseudomonas mendocina (strain ymp) (Pseudomonas mendocina).